The primary structure comprises 763 residues: Cyclin-F (763 aa).

The short motif at 19–27 (KRRVKRRPR) is the Nuclear localization signal 1 element. The F-box domain occupies 28 to 75 (VLTLLSLPEDVLLYVLECLPAVDILSMREVHPHLRSLVDSHSSVWARA). One can recognise a Cyclin N-terminal domain in the interval 299–411 (INKTSIFTTQ…EIISALEGKI (113 aa)). Short sequence motifs (d box) lie at residues 316–319 (RYIL) and 355–358 (RAKL). Disordered stretches follow at residues 574–600 (GSKT…TAEL) and 677–763 (KLEN…SDEL). A Nuclear localization signal 2 motif is present at residues 575–581 (SKTKRRR). Residues 580–590 (RREDSIQEDRG) show a composition bias toward basic and acidic residues. The PEST stretch occupies residues 589–747 (RGSFVTTPTA…LFKASRRQVK (159 aa)). The segment covering 692-710 (SSGYSSVSSGGSPTSSSSP) has biased composition (low complexity). The segment covering 741 to 751 (ASRRQVKRKNQ) has biased composition (basic residues).

This sequence belongs to the cyclin family. Cyclin AB subfamily. Component of the SCF(CCNF) complex.

Its subcellular location is the nucleus. It localises to the cytoplasm. The protein localises to the perinuclear region. The protein resides in the cytoskeleton. It is found in the microtubule organizing center. Its subcellular location is the centrosome. It localises to the centriole. In terms of biological role, substrate recognition component of the SCF(CCNF) E3 ubiquitin-protein ligase complex which mediates the ubiquitination and subsequent proteasomal degradation of target proteins. The SCF(CCNF) E3 ubiquitin-protein ligase complex is an integral component of the ubiquitin proteasome system (UPS) and links proteasome degradation to the cell cycle. Mediates the substrate recognition and the proteasomal degradation of various target proteins during G2 phase involved in the regulation of cell cycle progression and in the maintenance of genome stability. The protein is Cyclin-F (ccnf) of Xenopus tropicalis (Western clawed frog).